The chain runs to 356 residues: DNA polymerase IV (356 aa).

The UmuC domain occupies 7-188 (IIHIDMDAFY…IPVTKFYGVG (182 aa)). Positions 11 and 106 each coordinate Mg(2+). Glutamate 107 is a catalytic residue.

It belongs to the DNA polymerase type-Y family. In terms of assembly, monomer. The cofactor is Mg(2+).

Its subcellular location is the cytoplasm. The enzyme catalyses DNA(n) + a 2'-deoxyribonucleoside 5'-triphosphate = DNA(n+1) + diphosphate. Functionally, poorly processive, error-prone DNA polymerase involved in untargeted mutagenesis. Copies undamaged DNA at stalled replication forks, which arise in vivo from mismatched or misaligned primer ends. These misaligned primers can be extended by PolIV. Exhibits no 3'-5' exonuclease (proofreading) activity. May be involved in translesional synthesis, in conjunction with the beta clamp from PolIII. This chain is DNA polymerase IV, found in Listeria monocytogenes serotype 4a (strain HCC23).